A 162-amino-acid chain; its full sequence is NADH-quinone oxidoreductase subunit I (162 aa).

2 consecutive 4Fe-4S ferredoxin-type domains span residues 52-82 (LRRY…IEAG) and 93-122 (VRYD…EGPN). [4Fe-4S] cluster is bound by residues Cys62, Cys65, Cys68, Cys72, Cys102, Cys105, Cys108, and Cys112.

The protein belongs to the complex I 23 kDa subunit family. As to quaternary structure, NDH-1 is composed of 14 different subunits. Subunits NuoA, H, J, K, L, M, N constitute the membrane sector of the complex. [4Fe-4S] cluster serves as cofactor.

The protein localises to the cell inner membrane. The catalysed reaction is a quinone + NADH + 5 H(+)(in) = a quinol + NAD(+) + 4 H(+)(out). NDH-1 shuttles electrons from NADH, via FMN and iron-sulfur (Fe-S) centers, to quinones in the respiratory chain. The immediate electron acceptor for the enzyme in this species is believed to be ubiquinone. Couples the redox reaction to proton translocation (for every two electrons transferred, four hydrogen ions are translocated across the cytoplasmic membrane), and thus conserves the redox energy in a proton gradient. The polypeptide is NADH-quinone oxidoreductase subunit I (Nitrobacter winogradskyi (strain ATCC 25391 / DSM 10237 / CIP 104748 / NCIMB 11846 / Nb-255)).